A 166-amino-acid chain; its full sequence is NAD(P)H-quinone oxidoreductase subunit I, chloroplastic (166 aa).

4Fe-4S ferredoxin-type domains are found at residues G55 to K84 and L95 to E124. 8 residues coordinate [4Fe-4S] cluster: C64, C67, C70, C74, C104, C107, C110, and C114.

This sequence belongs to the complex I 23 kDa subunit family. NDH is composed of at least 16 different subunits, 5 of which are encoded in the nucleus. [4Fe-4S] cluster is required as a cofactor.

The protein resides in the plastid. It localises to the chloroplast thylakoid membrane. It catalyses the reaction a plastoquinone + NADH + (n+1) H(+)(in) = a plastoquinol + NAD(+) + n H(+)(out). The enzyme catalyses a plastoquinone + NADPH + (n+1) H(+)(in) = a plastoquinol + NADP(+) + n H(+)(out). Its function is as follows. NDH shuttles electrons from NAD(P)H:plastoquinone, via FMN and iron-sulfur (Fe-S) centers, to quinones in the photosynthetic chain and possibly in a chloroplast respiratory chain. The immediate electron acceptor for the enzyme in this species is believed to be plastoquinone. Couples the redox reaction to proton translocation, and thus conserves the redox energy in a proton gradient. The sequence is that of NAD(P)H-quinone oxidoreductase subunit I, chloroplastic from Enydra sessilis (Smallray swampwort).